The following is a 597-amino-acid chain: Leishmanolysin (597 aa).

The signal sequence occupies residues 1-39 (MSVDSSSTHRHRCVAARLVPLAAAGAAVTVAVGTAAAWA). The propeptide at 40–99 (HAGAVQHRCIHDAMQARVRQSVAAQRMAPSAVSAVGLPHVTLDAGNTAAGADPSTGTANV) is activation peptide. Disulfide bonds link Cys-124-Cys-141 and Cys-190-Cys-229. His-263 contacts Zn(2+). Glu-264 is an active-site residue. Residue His-267 coordinates Zn(2+). N-linked (GlcNAc...) asparagine glycosylation is present at Asn-299. Disulfide bonds link Cys-313/Cys-383, Cys-390/Cys-452, Cys-403/Cys-422, Cys-412/Cys-486, Cys-463/Cys-507, Cys-512/Cys-562, and Cys-532/Cys-555. His-332 lines the Zn(2+) pocket. An N-linked (GlcNAc...) asparagine glycan is attached at Asn-404. A lipid anchor (GPI-anchor amidated asparagine) is attached at Asn-574. The propeptide at 575–597 (AAGRRGPRAATALVVAALLAVAL) is removed in mature form.

It belongs to the peptidase M8 family. Zn(2+) is required as a cofactor.

The protein localises to the cell membrane. The catalysed reaction is Preference for hydrophobic residues at P1 and P1' and basic residues at P2' and P3'. A model nonapeptide is cleaved at -Ala-Tyr-|-Leu-Lys-Lys-.. In terms of biological role, has an integral role during the infection of macrophages in the mammalian host. The chain is Leishmanolysin (gp63) from Leishmania amazonensis.